The primary structure comprises 153 residues: 3-hydroxyacyl-[acyl-carrier-protein] dehydratase FabZ (153 aa).

The active site involves His-54.

It belongs to the thioester dehydratase family. FabZ subfamily.

The protein resides in the cytoplasm. The enzyme catalyses a (3R)-hydroxyacyl-[ACP] = a (2E)-enoyl-[ACP] + H2O. Functionally, involved in unsaturated fatty acids biosynthesis. Catalyzes the dehydration of short chain beta-hydroxyacyl-ACPs and long chain saturated and unsaturated beta-hydroxyacyl-ACPs. In Shewanella loihica (strain ATCC BAA-1088 / PV-4), this protein is 3-hydroxyacyl-[acyl-carrier-protein] dehydratase FabZ.